The following is a 354-amino-acid chain: Membrane progestin receptor beta (354 aa).

The Cytoplasmic segment spans residues Met1–Glu75. Residues Val76–Phe96 form a helical membrane-spanning segment. Topologically, residues Val97 to Pro111 are extracellular. The helical transmembrane segment at Leu112–Leu132 threads the bilayer. The Cytoplasmic portion of the chain corresponds to Gln133 to Arg174. A helical membrane pass occupies residues Phe175 to Cys195. At Tyr196–Gln213 the chain is on the extracellular side. The helical transmembrane segment at Val214 to Leu234 threads the bilayer. At Cys235–Gln243 the chain is on the cytoplasmic side. Residues Ala244–Cys264 form a helical membrane-spanning segment. Residues Pro265 to Gln283 lie on the Extracellular side of the membrane. A helical membrane pass occupies residues Ile284–Tyr304. Over Lys305 to Ser319 the chain is Cytoplasmic. Residues Ile320–Leu340 traverse the membrane as a helical segment. Over Leu341 to Ser354 the chain is Extracellular.

The protein belongs to the ADIPOR family.

Its subcellular location is the cell membrane. Steroid membrane receptor. Binds progesterone. May be involved in oocyte maturation. The chain is Membrane progestin receptor beta (PAQR8) from Sus scrofa (Pig).